The chain runs to 211 residues: tRNA (pseudouridine(54)-N(1))-methyltransferase (211 aa).

3 residues coordinate S-adenosyl-L-methionine: Leu-128, Gly-150, and Cys-183.

This sequence belongs to the methyltransferase superfamily. TrmY family. Homodimer.

It localises to the cytoplasm. The catalysed reaction is pseudouridine(54) in tRNA + S-adenosyl-L-methionine = N(1)-methylpseudouridine(54) in tRNA + S-adenosyl-L-homocysteine + H(+). Its function is as follows. Specifically catalyzes the N1-methylation of pseudouridine at position 54 (Psi54) in tRNAs. The chain is tRNA (pseudouridine(54)-N(1))-methyltransferase from Methanosarcina mazei (strain ATCC BAA-159 / DSM 3647 / Goe1 / Go1 / JCM 11833 / OCM 88) (Methanosarcina frisia).